We begin with the raw amino-acid sequence, 165 residues long: Endoribonuclease YbeY (165 aa).

The Zn(2+) site is built by H130, H134, and H140.

The protein belongs to the endoribonuclease YbeY family. Zn(2+) serves as cofactor.

It is found in the cytoplasm. Its function is as follows. Single strand-specific metallo-endoribonuclease involved in late-stage 70S ribosome quality control and in maturation of the 3' terminus of the 16S rRNA. The chain is Endoribonuclease YbeY from Streptococcus pneumoniae serotype 4 (strain ATCC BAA-334 / TIGR4).